Here is a 325-residue protein sequence, read N- to C-terminus: MSDLTHNDIQPYQAHPELVRALGRVAVFMGGDSAEREVSLKSGKAVLAALQSAGIDAVGRDIQGCLLRTVDEPDFDRVFIALHGRGGEDGTLQAILGQAGIPYTGSEVLASALAMDKLRTKYVFEGCGLPTPAFRAMTSVGEAEGIVAALGTPLSVKPAHEGSSIGIRKVNSAAELAEAYEAAARLDDLVLVEQWIEGPEFTVSLLQDKALPAIGLSTDHAFYDYDAKYLADDTRYRIPCGLAPDDELRLQHLALDAFRVLGCRTWGRVDIMQDRAGEFWLLEVNTVPGMTDHSLVPMAAKAAGISFEELVVRILRDTLAEGIDA.

The region spanning 121-316 (KYVFEGCGLP…FEELVVRILR (196 aa)) is the ATP-grasp domain. Residue 147–202 (VAALGTPLSVKPAHEGSSIGIRKVNSAAELAEAYEAAARLDDLVLVEQWIEGPEFT) participates in ATP binding. Positions 270, 283, and 285 each coordinate Mg(2+).

Belongs to the D-alanine--D-alanine ligase family. It depends on Mg(2+) as a cofactor. Requires Mn(2+) as cofactor.

It localises to the cytoplasm. The catalysed reaction is 2 D-alanine + ATP = D-alanyl-D-alanine + ADP + phosphate + H(+). Its pathway is cell wall biogenesis; peptidoglycan biosynthesis. In terms of biological role, cell wall formation. This chain is D-alanine--D-alanine ligase, found in Marinobacter nauticus (strain ATCC 700491 / DSM 11845 / VT8) (Marinobacter aquaeolei).